The chain runs to 882 residues: Alanine--tRNA ligase (882 aa).

Residues histidine 570, histidine 574, cysteine 672, and histidine 676 each contribute to the Zn(2+) site.

The protein belongs to the class-II aminoacyl-tRNA synthetase family. Zn(2+) serves as cofactor.

It is found in the cytoplasm. It catalyses the reaction tRNA(Ala) + L-alanine + ATP = L-alanyl-tRNA(Ala) + AMP + diphosphate. Its function is as follows. Catalyzes the attachment of alanine to tRNA(Ala) in a two-step reaction: alanine is first activated by ATP to form Ala-AMP and then transferred to the acceptor end of tRNA(Ala). Also edits incorrectly charged Ser-tRNA(Ala) and Gly-tRNA(Ala) via its editing domain. The sequence is that of Alanine--tRNA ligase from Xanthomonas campestris pv. campestris (strain ATCC 33913 / DSM 3586 / NCPPB 528 / LMG 568 / P 25).